We begin with the raw amino-acid sequence, 537 residues long: Chaperonin GroEL 3 (537 aa).

Residues 30–33 (TLGP), 87–91 (DGTTT), G414, 480–482 (DAL), and D496 each bind ATP.

It belongs to the chaperonin (HSP60) family. Forms a cylinder of 14 subunits composed of two heptameric rings stacked back-to-back. Interacts with the co-chaperonin GroES.

Its subcellular location is the cytoplasm. The enzyme catalyses ATP + H2O + a folded polypeptide = ADP + phosphate + an unfolded polypeptide.. In terms of biological role, together with its co-chaperonin GroES, plays an essential role in assisting protein folding. The GroEL-GroES system forms a nano-cage that allows encapsulation of the non-native substrate proteins and provides a physical environment optimized to promote and accelerate protein folding. In Acaryochloris marina (strain MBIC 11017), this protein is Chaperonin GroEL 3.